A 170-amino-acid polypeptide reads, in one-letter code: Capsid protein (170 aa).

The segment covering 1–19 has biased composition (basic residues); it reads MAQLRWGRKGVRSQRRKYS. The tract at residues 1–25 is disordered; it reads MAQLRWGRKGVRSQRRKYSRPVAYK.

The protein belongs to the nanoviridae capsid protein family.

The protein localises to the virion. The chain is Capsid protein (DNA-S) from Subterranean clover stunt virus (strain J) (SCSV).